Consider the following 341-residue polypeptide: tRNA N6-adenosine threonylcarbamoyltransferase (341 aa).

Residues histidine 114 and histidine 118 each coordinate Fe cation. Substrate is bound by residues 136-140 (LVSGG), aspartate 169, glycine 182, aspartate 186, and asparagine 278. Fe cation is bound at residue aspartate 304.

The protein belongs to the KAE1 / TsaD family. Fe(2+) serves as cofactor.

The protein localises to the cytoplasm. It catalyses the reaction L-threonylcarbamoyladenylate + adenosine(37) in tRNA = N(6)-L-threonylcarbamoyladenosine(37) in tRNA + AMP + H(+). Functionally, required for the formation of a threonylcarbamoyl group on adenosine at position 37 (t(6)A37) in tRNAs that read codons beginning with adenine. Is involved in the transfer of the threonylcarbamoyl moiety of threonylcarbamoyl-AMP (TC-AMP) to the N6 group of A37, together with TsaE and TsaB. TsaD likely plays a direct catalytic role in this reaction. This Lactococcus lactis subsp. cremoris (strain SK11) protein is tRNA N6-adenosine threonylcarbamoyltransferase.